The following is a 616-amino-acid chain: Methionine--tRNA ligase, chloroplastic/mitochondrial (616 aa).

The short motif at 78-88 (YYVNAPPHMGS) is the 'HIGH' region element. Positions 366 to 370 (KMGKS) match the 'KMSKS' region motif. Lys-369 provides a ligand contact to ATP. The span at 582–593 (LNPEKEEDEKKP) shows a compositional bias: basic and acidic residues. Residues 582-602 (LNPEKEEDEKKPKVGKKTGKA) are disordered.

It belongs to the class-I aminoacyl-tRNA synthetase family.

The protein resides in the plastid. Its subcellular location is the chloroplast. The protein localises to the mitochondrion. The enzyme catalyses tRNA(Met) + L-methionine + ATP = L-methionyl-tRNA(Met) + AMP + diphosphate. This is Methionine--tRNA ligase, chloroplastic/mitochondrial from Arabidopsis thaliana (Mouse-ear cress).